The primary structure comprises 209 residues: Dehydration-responsive element-binding protein 1F (209 aa).

Positions 14–26 (KKRAGRRVFKETR) match the Nuclear localization signal motif. Positions 29–86 (VYRGIRRRNGDKWVCEVREPTHQRRIWLGTYPTADMAARAHDVAVLALRGRSACLNFA) form a DNA-binding region, AP2/ERF. The segment at 137 to 157 (FGSGSGSGSGSEERNSSSYGF) is disordered.

Belongs to the AP2/ERF transcription factor family. ERF subfamily.

The protein resides in the nucleus. Functionally, transcriptional activator that binds specifically to the DNA sequence 5'-[AG]CCGAC-3'. Binding to the C-repeat/DRE element mediates cold or dehydration-inducible transcription. CBF/DREB1 factors play a key role in freezing tolerance and cold acclimation. This chain is Dehydration-responsive element-binding protein 1F (DREB1F), found in Arabidopsis thaliana (Mouse-ear cress).